A 383-amino-acid chain; its full sequence is 1-deoxy-D-xylulose 5-phosphate reductoisomerase (383 aa).

Positions 10, 11, 12, 13, 36, 37, 38, and 122 each coordinate NADPH. Position 123 (lysine 123) interacts with 1-deoxy-D-xylulose 5-phosphate. Glutamate 124 is an NADPH binding site. Aspartate 148 serves as a coordination point for Mn(2+). 4 residues coordinate 1-deoxy-D-xylulose 5-phosphate: serine 149, glutamate 150, serine 174, and histidine 197. Glutamate 150 provides a ligand contact to Mn(2+). Glycine 203 is a binding site for NADPH. The 1-deoxy-D-xylulose 5-phosphate site is built by serine 210, asparagine 215, lysine 216, and glutamate 219. Glutamate 219 serves as a coordination point for Mn(2+).

Belongs to the DXR family. It depends on Mg(2+) as a cofactor. Mn(2+) is required as a cofactor.

The catalysed reaction is 2-C-methyl-D-erythritol 4-phosphate + NADP(+) = 1-deoxy-D-xylulose 5-phosphate + NADPH + H(+). It functions in the pathway isoprenoid biosynthesis; isopentenyl diphosphate biosynthesis via DXP pathway; isopentenyl diphosphate from 1-deoxy-D-xylulose 5-phosphate: step 1/6. Its function is as follows. Catalyzes the NADPH-dependent rearrangement and reduction of 1-deoxy-D-xylulose-5-phosphate (DXP) to 2-C-methyl-D-erythritol 4-phosphate (MEP). This is 1-deoxy-D-xylulose 5-phosphate reductoisomerase from Bacillus pumilus (strain SAFR-032).